Consider the following 202-residue polypeptide: Ribosomal RNA small subunit methyltransferase G (202 aa).

Residues glycine 75, phenylalanine 80, 125 to 126 (VQ), and arginine 139 contribute to the S-adenosyl-L-methionine site.

It belongs to the methyltransferase superfamily. RNA methyltransferase RsmG family.

Its subcellular location is the cytoplasm. Specifically methylates the N7 position of a guanine in 16S rRNA. This is Ribosomal RNA small subunit methyltransferase G from Mesomycoplasma hyopneumoniae (strain 232) (Mycoplasma hyopneumoniae).